The following is a 373-amino-acid chain: 3-dehydroquinate synthase (373 aa).

NAD(+) is bound by residues 67–72 (EGEETK), 101–105 (GVILD), 125–126 (TT), Lys-138, and Lys-147. 3 residues coordinate Zn(2+): Glu-180, His-240, and His-256.

The protein belongs to the sugar phosphate cyclases superfamily. Dehydroquinate synthase family. NAD(+) is required as a cofactor. Co(2+) serves as cofactor. The cofactor is Zn(2+).

It is found in the cytoplasm. It carries out the reaction 7-phospho-2-dehydro-3-deoxy-D-arabino-heptonate = 3-dehydroquinate + phosphate. The protein operates within metabolic intermediate biosynthesis; chorismate biosynthesis; chorismate from D-erythrose 4-phosphate and phosphoenolpyruvate: step 2/7. Its function is as follows. Catalyzes the conversion of 3-deoxy-D-arabino-heptulosonate 7-phosphate (DAHP) to dehydroquinate (DHQ). This is 3-dehydroquinate synthase from Chlamydia trachomatis serovar A (strain ATCC VR-571B / DSM 19440 / HAR-13).